A 506-amino-acid chain; its full sequence is Protein MGF 505-4R (506 aa).

Belongs to the asfivirus MGF 505 family.

In terms of biological role, plays a role in virus cell tropism, and may be required for efficient virus replication in macrophages. In Ornithodoros (relapsing fever ticks), this protein is Protein MGF 505-4R.